We begin with the raw amino-acid sequence, 671 residues long: NADH-quinone oxidoreductase subunit G (671 aa).

Residues 1-78 enclose the 2Fe-2S ferredoxin-type domain; sequence MIKLNIDGSE…GMVIHTDTPM (78 aa). [2Fe-2S] cluster contacts are provided by Cys-34, Cys-45, Cys-48, and Cys-62. The 40-residue stretch at 78-117 folds into the 4Fe-4S His(Cys)3-ligated-type domain; the sequence is MVKKAREGVMEFLLINHPLDCPICDQGGECDLQDQAFRYG. Positions 94, 98, 101, 107, 146, 149, 152, and 196 each coordinate [4Fe-4S] cluster. The region spanning 215–271 is the 4Fe-4S Mo/W bis-MGD-type domain; it reads LKHTASIGVHDAEGSNIRIDSRGDEVMRILPRVNEEINEEWLSDKNRFSYDGLKYQR.

It belongs to the complex I 75 kDa subunit family. The cofactor is [2Fe-2S] cluster. [4Fe-4S] cluster serves as cofactor.

The enzyme catalyses a quinone + NADH + 5 H(+)(in) = a quinol + NAD(+) + 4 H(+)(out). Functionally, NDH-1 shuttles electrons from NADH, via FMN and iron-sulfur (Fe-S) centers, to quinones in the respiratory chain. Couples the redox reaction to proton translocation (for every two electrons transferred, four hydrogen ions are translocated across the cytoplasmic membrane), and thus conserves the redox energy in a proton gradient. The sequence is that of NADH-quinone oxidoreductase subunit G (nuoG) from Rickettsia felis (strain ATCC VR-1525 / URRWXCal2) (Rickettsia azadi).